The following is a 94-amino-acid chain: Defensin-7 (94 aa).

Residues 1-19 form the signal peptide; it reads MRTLTLLSAFLLVALQAWA. Intrachain disulfides connect C65/C93 and C72/C92.

The protein belongs to the alpha-defensin family.

The protein resides in the secreted. In terms of biological role, has antimicrobial activity. The protein is Defensin-7 (DEFA7) of Pan troglodytes (Chimpanzee).